Consider the following 551-residue polypeptide: mRNA cap guanine-N(7) methyltransferase (551 aa).

Positions 1–10 are enriched in polar residues; that stretch reads MENRSSSGTP. The tract at residues 1–152 is disordered; it reads MENRSSSGTP…DRETLRRRQE (152 aa). 2 stretches are compositionally biased toward basic and acidic residues: residues 48–76 and 141–152; these read VTEE…EERH and LVDRETLRRRQE. Residues 194–551 form the mRNA cap 0 methyltransferase domain; it reads SKIKGLRSFN…FYHAFCFYKV (358 aa). 203 to 204 contacts mRNA; the sequence is NN. S-adenosyl-L-methionine is bound by residues Lys207, Gly250, Asp274, Asp312, 355–357, and Tyr360; that span reads MFA. Residues 407 to 430 are disordered; that stretch reads KAREEQEKKEKSDEAPEDGEVEED. Basic and acidic residues predominate over residues 408–420; it reads AREEQEKKEKSDE. Residues 421–430 show a composition bias toward acidic residues; sequence APEDGEVEED.

Belongs to the class I-like SAM-binding methyltransferase superfamily. mRNA cap 0 methyltransferase family.

It localises to the nucleus. It carries out the reaction a 5'-end (5'-triphosphoguanosine)-ribonucleoside in mRNA + S-adenosyl-L-methionine = a 5'-end (N(7)-methyl 5'-triphosphoguanosine)-ribonucleoside in mRNA + S-adenosyl-L-homocysteine. Responsible for methylating the 5'-cap structure of mRNAs. The chain is mRNA cap guanine-N(7) methyltransferase (abd1) from Aspergillus clavatus (strain ATCC 1007 / CBS 513.65 / DSM 816 / NCTC 3887 / NRRL 1 / QM 1276 / 107).